A 93-amino-acid polypeptide reads, in one-letter code: Large ribosomal subunit protein eL37A (93 aa).

Cysteine 19, cysteine 22, cysteine 34, and cysteine 37 together coordinate Zn(2+). Residues 19–37 form a C4-type zinc finger; that stretch reads CRRCGRSSYHIQKSTCAQC.

This sequence belongs to the eukaryotic ribosomal protein eL37 family. The cofactor is Zn(2+).

Functionally, binds to the 23S rRNA. This Drosophila melanogaster (Fruit fly) protein is Large ribosomal subunit protein eL37A.